The primary structure comprises 69 residues: Large ribosomal subunit protein uL30 (69 aa).

This sequence belongs to the universal ribosomal protein uL30 family. Part of the 50S ribosomal subunit.

The sequence is that of Large ribosomal subunit protein uL30 from Rhizobium etli (strain CIAT 652).